We begin with the raw amino-acid sequence, 347 residues long: Probable RNA methyltransferase azo0122 (347 aa).

Residue Glu-89 is the Proton acceptor of the active site. One can recognise a Radical SAM core domain in the interval 92 to 318; the sequence is LLLRDGLCVS…AKLRQSAGQD (227 aa). A disulfide bridge links Cys-99 with Cys-323. Residues Cys-106, Cys-110, and Cys-113 each coordinate [4Fe-4S] cluster. S-adenosyl-L-methionine-binding positions include 151-152, Ser-181, 204-206, and Asn-280; these read GE and SLH. Cys-323 (S-methylcysteine intermediate) is an active-site residue.

The protein belongs to the radical SAM superfamily. RlmN family. The cofactor is [4Fe-4S] cluster.

The protein resides in the cytoplasm. In Azoarcus sp. (strain BH72), this protein is Probable RNA methyltransferase azo0122.